A 278-amino-acid polypeptide reads, in one-letter code: Formamidopyrimidine-DNA glycosylase (278 aa).

Pro-2 acts as the Schiff-base intermediate with DNA in catalysis. The Proton donor role is filled by Glu-3. The Proton donor; for beta-elimination activity role is filled by Lys-58. Residues His-91, Arg-109, and Arg-158 each coordinate DNA. Residues 243–277 form an FPG-type zinc finger; the sequence is KVYDRKGLPCKVCKTPISQMVQGQRTTYFCSQCQK. Arg-267 (proton donor; for delta-elimination activity) is an active-site residue.

Belongs to the FPG family. As to quaternary structure, monomer. Zn(2+) serves as cofactor.

It carries out the reaction Hydrolysis of DNA containing ring-opened 7-methylguanine residues, releasing 2,6-diamino-4-hydroxy-5-(N-methyl)formamidopyrimidine.. It catalyses the reaction 2'-deoxyribonucleotide-(2'-deoxyribose 5'-phosphate)-2'-deoxyribonucleotide-DNA = a 3'-end 2'-deoxyribonucleotide-(2,3-dehydro-2,3-deoxyribose 5'-phosphate)-DNA + a 5'-end 5'-phospho-2'-deoxyribonucleoside-DNA + H(+). Involved in base excision repair of DNA damaged by oxidation or by mutagenic agents. Acts as a DNA glycosylase that recognizes and removes damaged bases. Has a preference for oxidized purines, such as 7,8-dihydro-8-oxoguanine (8-oxoG). Has AP (apurinic/apyrimidinic) lyase activity and introduces nicks in the DNA strand. Cleaves the DNA backbone by beta-delta elimination to generate a single-strand break at the site of the removed base with both 3'- and 5'-phosphates. This is Formamidopyrimidine-DNA glycosylase from Polynucleobacter necessarius subsp. necessarius (strain STIR1).